Here is a 146-residue protein sequence, read N- to C-terminus: Type II secretion system core protein G (146 aa).

Positions 1–9 are cleaved as a propeptide — leader sequence; it reads MKKMRKQTG. Phenylalanine 10 is modified (N-methylphenylalanine). The chain crosses the membrane as a helical span at residues 10–30; it reads FTLLEVMVVVVILGILASFVV.

This sequence belongs to the GSP G family. In terms of assembly, type II secretion system is composed of four main components: the outer membrane complex, the inner membrane complex, the cytoplasmic secretion ATPase and the periplasm-spanning pseudopilus. Forms homomultimers. Interacts with EspL. Post-translationally, cleaved by the prepilin peptidase. Methylated by prepilin peptidase at the amino group of the N-terminal phenylalanine once the leader sequence is cleaved.

The protein localises to the cell inner membrane. Functionally, core component of the type II secretion system required for the energy-dependent secretion of extracellular factors such as proteases and toxins from the periplasm. Pseudopilin (pilin-like) protein that polymerizes to form the pseudopilus. Further polymerization triggers pseudopilus growth. This Vibrio cholerae serotype O1 (strain ATCC 39315 / El Tor Inaba N16961) protein is Type II secretion system core protein G (epsG).